The sequence spans 418 residues: 6-methylpretetramide 4-monooxygenase (418 aa).

FAD contacts are provided by residues 15 to 44 and 289 to 299; these read DVCV…LVER and WARDGLLLIGD.

The protein belongs to the PheA/TfdB FAD monooxygenase family. It depends on FAD as a cofactor.

The catalysed reaction is 6-methylpretetramide + NADPH + O2 + 2 H(+) = 4-hydroxy-6-methylpretetramide + NADP(+) + H2O. It participates in antibiotic biosynthesis; oxytetracycline biosynthesis. Functionally, involved in the biosynthesis of the tetracycline antibiotic, oxytetracycline. Catalyzes the C-4 hydroxylation of 6-methylpretetramide to yield the intermediate 4-hydroxyl-6-methylpretetramid, which is subsequently hydroxylated by OxyL to yield 4-keto-anhydrotetracycline. OxyE serves as the ancillary enzyme to assist OxyL in the hydroxylation of C-4. The chain is 6-methylpretetramide 4-monooxygenase from Streptomyces rimosus.